We begin with the raw amino-acid sequence, 424 residues long: Phosphomethylpyrimidine synthase (424 aa).

Substrate-binding positions include Met-94, Tyr-123, His-162, Ser-184–Gly-186, Asn-225–Arg-228, and Glu-264. His-268 contributes to the Zn(2+) binding site. Tyr-291 contacts substrate. Zn(2+) is bound at residue His-332. Positions 406, 409, and 413 each coordinate [4Fe-4S] cluster.

It belongs to the ThiC family. It depends on [4Fe-4S] cluster as a cofactor.

The catalysed reaction is 5-amino-1-(5-phospho-beta-D-ribosyl)imidazole + S-adenosyl-L-methionine = 4-amino-2-methyl-5-(phosphooxymethyl)pyrimidine + CO + 5'-deoxyadenosine + formate + L-methionine + 3 H(+). The protein operates within cofactor biosynthesis; thiamine diphosphate biosynthesis. Functionally, catalyzes the synthesis of the hydroxymethylpyrimidine phosphate (HMP-P) moiety of thiamine from aminoimidazole ribotide (AIR) in a radical S-adenosyl-L-methionine (SAM)-dependent reaction. In Methanosphaerula palustris (strain ATCC BAA-1556 / DSM 19958 / E1-9c), this protein is Phosphomethylpyrimidine synthase.